Reading from the N-terminus, the 408-residue chain is Snake venom 5'-nucleotidase (408 aa).

Zn(2+)-binding residues include His-54 and His-77. 2 N-linked (GlcNAc...) asparagine glycosylation sites follow: Asn-167 and Asn-181. 2 disulfides stabilise this stretch: Cys-187–Cys-192 and Cys-199–Cys-221. Residue Arg-188 participates in AMP binding. AMP is bound by residues Asn-224, Arg-229, and Phe-252. Cys-311 and Cys-314 are disulfide-bonded. Phe-335 and Asp-341 together coordinate AMP. Propeptides (removed in mature form) lie at residues 385-388 (DGTL) and 385-408 (DGTL…FFIL).

It belongs to the 5'-nucleotidase family. In terms of assembly, homodimer. Post-translationally, venom 5'-nucleotidases (or a part thereof) may be released into the venom via exosome-like vesicles. They may be attached via a GPI anchor to the membrane of these vesicles. Soluble forms of 5'-nucleotidase might be released by cleavage of the ectodomain in the exosome-like vesicles or venom gland cells. Expressed by the venom gland.

It is found in the membrane. It carries out the reaction a ribonucleoside 5'-phosphate + H2O = a ribonucleoside + phosphate. It catalyses the reaction AMP + H2O = adenosine + phosphate. The enzyme catalyses GMP + H2O = guanosine + phosphate. The catalysed reaction is ADP + H2O = AMP + phosphate + H(+). Is potently inhibited by metal ions Fe(3+), Cu(2+) and Zn(2+). Is enhanced by Mn(2+). Ca(2+) and Mg(2+) have no effect. Hydrolyzes nucleotides into nucleosides. Prefers AMP as the substrate but also cleaves GMP and ADP. Does not affect AMP, cAMP and cGMP. Inhibits ADP- and collagen-induced platelet aggregation. Snake venom 5'-nucleotidases are widely distributed among venomous snake taxa, but there is a lack of information about their biological activities. They have been shown to inhibit platelet aggregation. This effect may be due to the liberation of inhibitory AMP or adenosine by its action on ADP released upon initiation of aggregation. Venom 5'-nucleotidases are also known to synergistically act in vivo with other toxins like ADPases, phospholipases, and disintegrins to exert a more pronounced anti-coagulant effect. The sequence is that of Snake venom 5'-nucleotidase from Macrovipera lebetinus (Levantine viper).